The sequence spans 360 residues: Ribosomal RNA large subunit methyltransferase M (360 aa).

Residues Ser187, 220–223 (CPGG), Asp239, Asp259, and Asp276 contribute to the S-adenosyl-L-methionine site. Lys305 acts as the Proton acceptor in catalysis.

This sequence belongs to the class I-like SAM-binding methyltransferase superfamily. RNA methyltransferase RlmE family. RlmM subfamily. In terms of assembly, monomer.

It is found in the cytoplasm. It catalyses the reaction cytidine(2498) in 23S rRNA + S-adenosyl-L-methionine = 2'-O-methylcytidine(2498) in 23S rRNA + S-adenosyl-L-homocysteine + H(+). Catalyzes the 2'-O-methylation at nucleotide C2498 in 23S rRNA. The chain is Ribosomal RNA large subunit methyltransferase M from Shewanella pealeana (strain ATCC 700345 / ANG-SQ1).